A 988-amino-acid chain; its full sequence is Voltage-gated delayed rectifier potassium channel KCNH5 (988 aa).

Over 1 to 217 (MPGGKRGLVA…LHYCAFKTTW (217 aa)) the chain is Cytoplasmic. Positions 12 to 90 (QNTFLENIVR…VRQTFDNYES (79 aa)) constitute a PAS domain. In terms of domain architecture, PAC spans 91–143 (NCFEVLLYKKNRTPVWFYMQIAPIRNEHEKVVLFLCTFKDITLFKQPIEDDST). A helical transmembrane segment spans residues 218–238 (DWVILILTFYTAIMVPYNVSF). Residues 239 to 243 (KTKQN) lie on the Extracellular side of the membrane. The chain crosses the membrane as a helical span at residues 244–264 (NIAWLVLDSVVDVIFLVDIVL). The Cytoplasmic segment spans residues 265 to 291 (NFHTTFVGPGGEVISDPKLIRMNYLKT). A helical membrane pass occupies residues 292 to 312 (WFVIDLLSCLPYDIINAFENV). The Extracellular portion of the chain corresponds to 313–319 (DEGISSL). Residues 320 to 340 (FSSLKVVRLLRLGRVARKLDH) form a helical; Voltage-sensor membrane-spanning segment. The Cytoplasmic segment spans residues 341–346 (YLEYGA). Residues 347–367 (AVLVLLVCVFGLVAHWLACIW) traverse the membrane as a helical segment. Residues 368–419 (YSIGDYEVIDEVTNTIQIDSWLYQLALSIGTPYRYNTSAGIWEGGPSKDSLY) lie on the Extracellular side of the membrane. N-linked (GlcNAc...) asparagine glycosylation occurs at Asn403. Residues 420–440 (VSSLYFTMTSLTTIGFGNIAP) constitute an intramembrane region (pore-forming). The short motif at 432 to 437 (TIGFGN) is the Selectivity filter element. Residues 441-446 (TTDVEK) are Extracellular-facing. A helical transmembrane segment spans residues 447–467 (MFSVAMMMVGSLLYATIFGNV). The Cytoplasmic portion of the chain corresponds to 468 to 988 (TTIFQQMYAN…PESDKDEIHF (521 aa)). 550–667 (AFRLASDGCL…NSFSRNLTLT (118 aa)) is a binding site for a nucleoside 3',5'-cyclic phosphate. Residues 704-715 (HPVRKLFQKFKQ) form a calmodulin-binding region. The tract at residues 717 to 742 (KELRNQGSTQGDPERNQLQVESRSLQ) is disordered. Residues 721–742 (NQGSTQGDPERNQLQVESRSLQ) are compositionally biased toward polar residues. Lys785 participates in a covalent cross-link: Glycyl lysine isopeptide (Lys-Gly) (interchain with G-Cter in ubiquitin). Positions 838 to 890 (GLLSEDPKSSDSENSVTKNPLRKTDSCDSGITKSDLRLDKAGEARSPLEHSPI) are disordered. The segment covering 871–885 (SDLRLDKAGEARSPL) has biased composition (basic and acidic residues). Ser883 bears the Phosphoserine mark. The tract at residues 909–948 (TLQEVKHELKEDIQLLSCRMTALEKQVAEILKILSEKSVP) is CAD (involved in subunit assembly). A disordered region spans residues 969–988 (DIFSVSRPESPESDKDEIHF). Residues 977–988 (ESPESDKDEIHF) are compositionally biased toward basic and acidic residues.

It belongs to the potassium channel family. H (Eag) (TC 1.A.1.20) subfamily. Kv10.2/KCNH5 sub-subfamily. In terms of assembly, homotetramer. The potassium channel is probably composed of a homo- or heterotetrameric complex of pore-forming alpha subunits that can associate with modulating beta subunits. Heteromultimer with KCNH1/EAG. Detected in brain, skeletal muscle, heart, placenta, lung and liver, and at low levels in kidney.

It localises to the membrane. It carries out the reaction K(+)(in) = K(+)(out). In terms of biological role, pore-forming (alpha) subunit of a voltage-gated delayed rectifier potassium channel that mediates outward-rectifying potassium currents which, on depolarization, reaches a steady-state level and do not inactivate. The kinetic is characterized by a slow activation time course and a small voltage dependence of the activation time constants, therefore, starts to open at more negative voltages. The activation kinetics depend on the prepulse potential and external divalent cation concentration. The time course of activation is biphasic with a fast and a slowly activating current component. With negative prepulses, the current activation is delayed and slowed down several fold, whereas more positive prepulses speed up activation, therefore the activation rate depends on holding potential. The polypeptide is Voltage-gated delayed rectifier potassium channel KCNH5 (Homo sapiens (Human)).